Reading from the N-terminus, the 423-residue chain is Lipoamide acyltransferase component of branched-chain alpha-keto acid dehydrogenase complex (423 aa).

The 76-residue stretch at 3-78 folds into the Lipoyl-binding domain; it reads THVIKMPDIG…AVGSELIRIE (76 aa). Position 44 is an N6-lipoyllysine (Lys-44). The Peripheral subunit-binding (PSBD) domain maps to 137 to 174; that stretch reads LASPAVRKRALDAGIELRYVHGSGPAGRILHEDLDAFM. Catalysis depends on residues His-395 and Asp-399.

Belongs to the 2-oxoacid dehydrogenase family. As to quaternary structure, forms a 24-polypeptide structural core with octahedral symmetry. (R)-lipoate is required as a cofactor.

The catalysed reaction is N(6)-[(R)-dihydrolipoyl]-L-lysyl-[protein] + 2-methylpropanoyl-CoA = N(6)-[(R)-S(8)-2-methylpropanoyldihydrolipoyl]-L-lysyl-[protein] + CoA. Functionally, the branched-chain alpha-keto dehydrogenase complex catalyzes the overall conversion of alpha-keto acids to acyl-CoA and CO(2). It contains multiple copies of three enzymatic components: branched-chain alpha-keto acid decarboxylase (E1), lipoamide acyltransferase (E2) and lipoamide dehydrogenase (E3). This is Lipoamide acyltransferase component of branched-chain alpha-keto acid dehydrogenase complex (bkdB) from Pseudomonas putida (Arthrobacter siderocapsulatus).